The primary structure comprises 514 residues: Glutathione-binding protein GsiB (514 aa).

Residues methionine 1–alanine 27 form the signal peptide.

Belongs to the bacterial solute-binding protein 5 family. In terms of assembly, the complex is composed of two ATP-binding proteins (GsiA), two transmembrane proteins (GsiC and GsiD) and a solute-binding protein (GsiB).

The protein localises to the periplasm. Functionally, part of the ABC transporter complex GsiABCD involved in glutathione import. Binds glutathione. This chain is Glutathione-binding protein GsiB, found in Pectobacterium atrosepticum (strain SCRI 1043 / ATCC BAA-672) (Erwinia carotovora subsp. atroseptica).